A 244-amino-acid polypeptide reads, in one-letter code: Transmembrane protein 176A (244 aa).

Serine 42 bears the Phosphoserine mark. The next 4 membrane-spanning stretches (helical) occupy residues 60-80, 92-112, 122-142, and 204-224; these read VLVASWVVQTVLGALSVVLGG, SEGAPFWTGIVAMLAGAVAFL, ALMRTLLVLASFCTAVAAIVI, and LLGIWVLLLLASLTPVCVYIW.

Belongs to the TMEM176 family. Interacts with MCOLN2. Specifically expressed in lung, kidney and spleen.

Its subcellular location is the membrane. This is Transmembrane protein 176A (Tmem176a) from Mus musculus (Mouse).